Here is a 359-residue protein sequence, read N- to C-terminus: Acidic skeletal organic matrix protein (359 aa).

The N-terminal stretch at 1–26 is a signal peptide; that stretch reads MLAPRLAFVLLLSSYFGSILITSVES. Disordered stretches follow at residues 60 to 83 and 224 to 254; these read FEEDDDDDDDEDNEESENEVEDFD and SEAEDPEEVDDAKRAETGKDPICVDPDDPNE. Residues 66 to 89 are a coiled coil; sequence DDDDEDNEESENEVEDFDDENALS.

Component of the acid-insoluble and acid-soluble organic matrix of the aragonitic skeleton (at protein level).

It localises to the secreted. In Acropora millepora (Staghorn coral), this protein is Acidic skeletal organic matrix protein.